The primary structure comprises 86 residues: Myosin light chain alkali (86 aa).

The 36-residue stretch at 11 to 46 (GCYEDFIECLKLYDKEENGTMMLAELQHALLALGES) folds into the EF-hand domain.

Myosin is a hexamer of 2 heavy chains and 4 light chains.

The protein is Myosin light chain alkali (Mlc1) of Drosophila subobscura (Fruit fly).